A 480-amino-acid polypeptide reads, in one-letter code: Aspartyl/glutamyl-tRNA(Asn/Gln) amidotransferase subunit B (480 aa).

The protein belongs to the GatB/GatE family. GatB subfamily. As to quaternary structure, heterotrimer of A, B and C subunits.

The catalysed reaction is L-glutamyl-tRNA(Gln) + L-glutamine + ATP + H2O = L-glutaminyl-tRNA(Gln) + L-glutamate + ADP + phosphate + H(+). It carries out the reaction L-aspartyl-tRNA(Asn) + L-glutamine + ATP + H2O = L-asparaginyl-tRNA(Asn) + L-glutamate + ADP + phosphate + 2 H(+). In terms of biological role, allows the formation of correctly charged Asn-tRNA(Asn) or Gln-tRNA(Gln) through the transamidation of misacylated Asp-tRNA(Asn) or Glu-tRNA(Gln) in organisms which lack either or both of asparaginyl-tRNA or glutaminyl-tRNA synthetases. The reaction takes place in the presence of glutamine and ATP through an activated phospho-Asp-tRNA(Asn) or phospho-Glu-tRNA(Gln). The polypeptide is Aspartyl/glutamyl-tRNA(Asn/Gln) amidotransferase subunit B (Streptococcus agalactiae serotype III (strain NEM316)).